Reading from the N-terminus, the 53-residue chain is Small polypeptide DEVIL 7 (53 aa).

Over residues 1–16 the composition is skewed to basic and acidic residues; the sequence is MREKYTKEEAVKNWEK. Residues 1–28 form a disordered region; the sequence is MREKYTKEEAVKNWEKKKNKPSSPKGVG. The tract at residues 22-53 is required for DVL/RTFL small polypeptide activity; sequence SSPKGVGEFLKKKKGRFYIIGKCITMLLCSHK. A helical membrane pass occupies residues 30 to 46; it reads FLKKKKGRFYIIGKCIT.

This sequence belongs to the DVL/RTFL small polypeptides family.

It localises to the cell membrane. Its function is as follows. Small polypeptide acting as a regulatory molecule which coordinates cellular responses required for differentiation, growth and development, probably by restricting polar cell proliferation in lateral organs and coordinating socket cell recruitment and differentiation at trichome sites. In Arabidopsis thaliana (Mouse-ear cress), this protein is Small polypeptide DEVIL 7.